Consider the following 274-residue polypeptide: Dermonecrotic toxin SdSicTox-betaIIB1bxiii (274 aa).

His-5 is an active-site residue. Residues Glu-25 and Asp-27 each contribute to the Mg(2+) site. The active-site Nucleophile is the His-41. 2 disulfides stabilise this stretch: Cys-45/Cys-51 and Cys-47/Cys-190. Asp-85 is a Mg(2+) binding site.

The protein belongs to the arthropod phospholipase D family. Class II subfamily. It depends on Mg(2+) as a cofactor. As to expression, expressed by the venom gland.

Its subcellular location is the secreted. The catalysed reaction is an N-(acyl)-sphingosylphosphocholine = an N-(acyl)-sphingosyl-1,3-cyclic phosphate + choline. It catalyses the reaction an N-(acyl)-sphingosylphosphoethanolamine = an N-(acyl)-sphingosyl-1,3-cyclic phosphate + ethanolamine. The enzyme catalyses a 1-acyl-sn-glycero-3-phosphocholine = a 1-acyl-sn-glycero-2,3-cyclic phosphate + choline. It carries out the reaction a 1-acyl-sn-glycero-3-phosphoethanolamine = a 1-acyl-sn-glycero-2,3-cyclic phosphate + ethanolamine. Its function is as follows. Dermonecrotic toxins cleave the phosphodiester linkage between the phosphate and headgroup of certain phospholipids (sphingolipid and lysolipid substrates), forming an alcohol (often choline) and a cyclic phosphate. This toxin acts on sphingomyelin (SM). It may also act on ceramide phosphoethanolamine (CPE), lysophosphatidylcholine (LPC) and lysophosphatidylethanolamine (LPE), but not on lysophosphatidylserine (LPS), and lysophosphatidylglycerol (LPG). It acts by transphosphatidylation, releasing exclusively cyclic phosphate products as second products. Induces dermonecrosis, hemolysis, increased vascular permeability, edema, inflammatory response, and platelet aggregation. This chain is Dermonecrotic toxin SdSicTox-betaIIB1bxiii, found in Sicarius cf. damarensis (strain GJB-2008) (Six-eyed sand spider).